A 1142-amino-acid polypeptide reads, in one-letter code: Enamelin (1142 aa).

The first 38 residues, 1 to 38, serve as a signal peptide directing secretion; it reads MLLSCRHGASSPKLDNLVPSGKMKILLVFLGLLCYSAA. Serine 53 is modified (phosphoserine). 4 disordered regions span residues 90-347, 374-513, 543-587, and 603-662; these read YQMP…FYRN, YRRV…IIPK, TEGI…LSHG, and RENS…FPGQ. Pro residues predominate over residues 128–148; the sequence is QPQPKTPTPKQPLNEPSPTPT. Serine 191 and serine 216 each carry phosphoserine. Over residues 223–234 the composition is skewed to basic and acidic residues; that stretch reads DFEKPKEKDPPK. 2 stretches are compositionally biased toward polar residues: residues 243–303 and 381–395; these read SVNT…SQSP and TARSNPPNYAGNSAN. Asparagine 245, asparagine 252, asparagine 264, and asparagine 291 each carry an N-linked (GlcNAc...) asparagine glycan. A propeptide spanning residues 277 to 514 is cleaved from the precursor; sequence NPRSNPTGQN…QTQTQIIPKG (238 aa). Over residues 431–442 the composition is skewed to basic and acidic residues; the sequence is PREKQVSQKERT. Over residues 453–467 the composition is skewed to polar residues; that stretch reads WRNSQDYGINKSNYK. N-linked (GlcNAc...) asparagine glycosylation is present at asparagine 462. Proline 547 is subject to Hydroxyproline. Positions 570–582 are enriched in basic and acidic residues; that stretch reads FKEDPGRQEEHLP. Positions 666–669 are excised as a propeptide; it reads DMEE. Over residues 787–816 the composition is skewed to polar residues; the sequence is NLYKTPTSSPHQKENQPYSNNSPAGLQKNP. Disordered stretches follow at residues 787–820, 921–965, and 1020–1049; these read NLYKTPTSSPHQKENQPYSNNSPAGLQKNPTWHE, TSIV…SQLS, and VFGTPDKEPRPEGIPNEMQGNESERQQQRQ. A glycan (N-linked (GlcNAc...) asparagine) is linked at asparagine 929. Polar residues predominate over residues 952-965; it reads LRRSTPCSVKSQLS. Asparagine 1040 is a glycosylation site (N-linked (GlcNAc...) asparagine).

Proteolytically cleaved into several smaller polypeptides. Cleavage of N-terminal region of enamelin occurs soon after secretion. Post-translationally, phosphorylated by FAM20C in vitro. In terms of tissue distribution, expressed by secretory-phase ameloblasts. Intact enamelin and large-molecular-weight enamelins are limited to the most superficial layer of the developing enamel matrix, while low-molecular-weight enamelins are observed in deeper enamelin. Preferential localization among the crystallites in rod and interrod enamel.

Its subcellular location is the secreted. The protein localises to the extracellular space. It is found in the extracellular matrix. In terms of biological role, involved in the mineralization and structural organization of enamel. Involved in the extension of enamel during the secretory stage of dental enamel formation. The polypeptide is Enamelin (ENAM) (Sus scrofa (Pig)).